The sequence spans 507 residues: ATP synthase subunit alpha (507 aa).

An ATP-binding site is contributed by 169–176 (GDRQTGKT).

The protein belongs to the ATPase alpha/beta chains family. As to quaternary structure, F-type ATPases have 2 components, CF(1) - the catalytic core - and CF(0) - the membrane proton channel. CF(1) has five subunits: alpha(3), beta(3), gamma(1), delta(1), epsilon(1). CF(0) has three main subunits: a(1), b(2) and c(9-12). The alpha and beta chains form an alternating ring which encloses part of the gamma chain. CF(1) is attached to CF(0) by a central stalk formed by the gamma and epsilon chains, while a peripheral stalk is formed by the delta and b chains.

The protein localises to the cell membrane. The catalysed reaction is ATP + H2O + 4 H(+)(in) = ADP + phosphate + 5 H(+)(out). Functionally, produces ATP from ADP in the presence of a proton gradient across the membrane. The alpha chain is a regulatory subunit. The chain is ATP synthase subunit alpha from Desulforudis audaxviator (strain MP104C).